The sequence spans 551 residues: Dihydroxy-acid dehydratase (551 aa).

Cys52 is a [2Fe-2S] cluster binding site. Asp84 contacts Mg(2+). A [2Fe-2S] cluster-binding site is contributed by Cys125. 2 residues coordinate Mg(2+): Asp126 and Lys127. Lys127 carries the N6-carboxylysine modification. Residue Cys197 coordinates [2Fe-2S] cluster. Glu448 contributes to the Mg(2+) binding site. Residue Ser474 is the Proton acceptor of the active site.

The protein belongs to the IlvD/Edd family. As to quaternary structure, homodimer. It depends on [2Fe-2S] cluster as a cofactor. The cofactor is Mg(2+).

The enzyme catalyses (2R)-2,3-dihydroxy-3-methylbutanoate = 3-methyl-2-oxobutanoate + H2O. The catalysed reaction is (2R,3R)-2,3-dihydroxy-3-methylpentanoate = (S)-3-methyl-2-oxopentanoate + H2O. Its pathway is amino-acid biosynthesis; L-isoleucine biosynthesis; L-isoleucine from 2-oxobutanoate: step 3/4. The protein operates within amino-acid biosynthesis; L-valine biosynthesis; L-valine from pyruvate: step 3/4. Functionally, functions in the biosynthesis of branched-chain amino acids. Catalyzes the dehydration of (2R,3R)-2,3-dihydroxy-3-methylpentanoate (2,3-dihydroxy-3-methylvalerate) into 2-oxo-3-methylpentanoate (2-oxo-3-methylvalerate) and of (2R)-2,3-dihydroxy-3-methylbutanoate (2,3-dihydroxyisovalerate) into 2-oxo-3-methylbutanoate (2-oxoisovalerate), the penultimate precursor to L-isoleucine and L-valine, respectively. This is Dihydroxy-acid dehydratase from Francisella tularensis subsp. tularensis (strain FSC 198).